Here is a 345-residue protein sequence, read N- to C-terminus: MRVAPMTSRFLDACRRRPTDVRPVWFMRQAGRYMKQYRQIREKHGILEICKRPDLAATVTLQPIEVLDVDAAIIFADLLLPIEPMGLKLKYEKGEGPVIGNPVRTSDDVDSLSTTNTDELGYVGEAIQHVVRALAGKVPVVGFVGAPFTMASYMIEGGASRNFVRTKKLMYSDETLWRRLMGKIVDVLAPFAHSQVAAGARAIQVFDSWVGALGSDDYVRFAAPYSRALIERIRSTGVPVIHFGTGASGFFRELHAAGGDVMGVDWRINIDQAWMDISYRSAIQGNLDPVALFAPLPELRTKVQELLKRTGTRPGHIFNLGHGILPETPVENVKAVVELVREFRP.

Substrate-binding positions include Arg28 to Arg32, Asp77, Tyr153, Ser208, and His322.

It belongs to the uroporphyrinogen decarboxylase family. In terms of assembly, homodimer.

It localises to the cytoplasm. It catalyses the reaction uroporphyrinogen III + 4 H(+) = coproporphyrinogen III + 4 CO2. It participates in porphyrin-containing compound metabolism; protoporphyrin-IX biosynthesis; coproporphyrinogen-III from 5-aminolevulinate: step 4/4. In terms of biological role, catalyzes the decarboxylation of four acetate groups of uroporphyrinogen-III to yield coproporphyrinogen-III. In Solibacter usitatus (strain Ellin6076), this protein is Uroporphyrinogen decarboxylase.